Here is an 83-residue protein sequence, read N- to C-terminus: RNA-binding protein Hfq (83 aa).

Residues Asp9–Val69 enclose the Sm domain.

The protein belongs to the Hfq family. In terms of assembly, homohexamer.

In terms of biological role, RNA chaperone that binds small regulatory RNA (sRNAs) and mRNAs to facilitate mRNA translational regulation in response to envelope stress, environmental stress and changes in metabolite concentrations. Also binds with high specificity to tRNAs. This chain is RNA-binding protein Hfq, found in Exiguobacterium sibiricum (strain DSM 17290 / CCUG 55495 / CIP 109462 / JCM 13490 / 255-15).